We begin with the raw amino-acid sequence, 552 residues long: Urocanate hydratase (552 aa).

NAD(+) is bound by residues 49–50 (GG), glutamine 127, 173–175 (GMG), aspartate 193, 239–240 (NA), 260–264 (QTSAH), 270–271 (YI), and tyrosine 319. Cysteine 407 is an active-site residue. Glycine 489 contacts NAD(+).

Belongs to the urocanase family. NAD(+) serves as cofactor.

The protein localises to the cytoplasm. It carries out the reaction 4-imidazolone-5-propanoate = trans-urocanate + H2O. It functions in the pathway amino-acid degradation; L-histidine degradation into L-glutamate; N-formimidoyl-L-glutamate from L-histidine: step 2/3. In terms of biological role, catalyzes the conversion of urocanate to 4-imidazolone-5-propionate. This Bacillus anthracis (strain CDC 684 / NRRL 3495) protein is Urocanate hydratase.